We begin with the raw amino-acid sequence, 380 residues long: Asporin (380 aa).

The signal sequence occupies residues 1–14; it reads MKEYVLLLFLALCS. Residues 15 to 32 constitute a propeptide that is removed on maturation; the sequence is AKPFFSPSHIALKNMMLK. The segment covering 35–54 has biased composition (acidic residues); the sequence is EDTDDDDDDDDDDDDDDEDN. Residues 35–59 form a disordered region; sequence EDTDDDDDDDDDDDDDDEDNSLFPT. S55 carries O-linked (GalNAc...) serine glycosylation. In terms of domain architecture, LRRNT spans 66 to 102; that stretch reads FFPFDLFPMCPFGCQCYSRVVHCSDLGLTSVPTNIPF. Intrachain disulfides connect C75-C81 and C79-C88. 11 LRR repeats span residues 103 to 124, 127 to 148, 151 to 173, 174 to 193, 196 to 219, 242 to 263, 266 to 287, 290 to 312, 313 to 334, 335 to 357, and 358 to 380; these read DTRM…DFKG, SLYG…AFLT, KLRR…PKSL, AELR…TFKG, ALHV…AFEG, TLLE…DFKR, ELQR…SLAN, RVRE…PELK, YLQI…DFCP, TVPK…VKYW, and EMQP…NFGM. An interaction with TGFB1 region spans residues 166–212; that stretch reads PLNLPKSLAELRIHENKVKKIQKDTFKGMNALHVLEMSANPLDNNGI. N282 carries N-linked (GlcNAc...) asparagine glycosylation. A disulfide bridge links C333 with C366.

It belongs to the small leucine-rich proteoglycan (SLRP) family. SLRP class I subfamily. As to quaternary structure, interacts with TGFB1, TGFB2 and TGFB3. DCN, BGN, and FMOD inhibit binding to TGFB1. Interacts with BMP2. Interacts in vitro with type II collagen. Interacts with type I collagen. DCN can inhibit collagen binding. Post-translationally, there is no serine/glycine dipeptide sequence expected for the attachment of O-linked glycosaminoglycans and this is probably not a proteoglycan. The O-linked polysaccharide on 54-Ser is probably the mucin type linked to GalNAc. In terms of processing, the N-linked glycan at Asn-282 is composed of variable structures of GlcNAc, mannose, fucose, HexNAc and hexose. Higher levels in osteoarthritic articular cartilage, aorta, uterus. Moderate expression in small intestine, heart, liver, bladder, ovary, stomach, and in the adrenal, thyroid, and mammary glands. Low expression in trachea, bone marrow, and lung. Colocalizes with TGFB1 in chondrocytes within osteoarthritic (OA) lesions of articular cartilage.

The protein localises to the secreted. It is found in the extracellular space. The protein resides in the extracellular matrix. Negatively regulates periodontal ligament (PDL) differentiation and mineralization to ensure that the PDL is not ossified and to maintain homeostasis of the tooth-supporting system. Inhibits BMP2-induced cytodifferentiation of PDL cells by preventing its binding to BMPR1B/BMP type-1B receptor, resulting in inhibition of BMP-dependent activation of SMAD proteins. Critical regulator of TGF-beta in articular cartilage and plays an essential role in cartilage homeostasis and osteoarthritis (OA) pathogenesis. Negatively regulates chondrogenesis in the articular cartilage by blocking the TGF-beta/receptor interaction on the cell surface and inhibiting the canonical TGF-beta/Smad signal. Binds calcium and plays a role in osteoblast-driven collagen biomineralization activity. In Homo sapiens (Human), this protein is Asporin (ASPN).